The primary structure comprises 164 residues: Interleukin-31 (164 aa).

An N-terminal signal peptide occupies residues 1-23 (MASHSGPSTSVLFLFCCLGGWLA). N-linked (GlcNAc...) asparagine glycosylation is found at Asn-67 and Asn-100.

In terms of tissue distribution, detected at low levels in testis, bone marrow, skeletal muscle, kidney, colon, thymus, small intestine and trachea.

The protein resides in the secreted. Its function is as follows. Activates STAT3 and possibly STAT1 and STAT5 through the IL31 heterodimeric receptor composed of IL31RA and OSMR. May function in skin immunity. Enhances myeloid progenitor cell survival in vitro. Induces RETNLA and serum amyloid A protein expression in macrophages. The protein is Interleukin-31 (IL31) of Homo sapiens (Human).